The chain runs to 660 residues: DNA ligase (660 aa).

Residues 33-37 (DFVYD), 82-83 (SL), and E110 each bind NAD(+). The active-site N6-AMP-lysine intermediate is K112. 4 residues coordinate NAD(+): R133, E167, K281, and K305. Zn(2+) contacts are provided by C396, C399, C412, and C417. The 78-residue stretch at 583-660 (GENKLLAGKK…SFEDIKSYLD (78 aa)) folds into the BRCT domain.

This sequence belongs to the NAD-dependent DNA ligase family. LigA subfamily. Mg(2+) is required as a cofactor. It depends on Mn(2+) as a cofactor.

It catalyses the reaction NAD(+) + (deoxyribonucleotide)n-3'-hydroxyl + 5'-phospho-(deoxyribonucleotide)m = (deoxyribonucleotide)n+m + AMP + beta-nicotinamide D-nucleotide.. Functionally, DNA ligase that catalyzes the formation of phosphodiester linkages between 5'-phosphoryl and 3'-hydroxyl groups in double-stranded DNA using NAD as a coenzyme and as the energy source for the reaction. It is essential for DNA replication and repair of damaged DNA. In Borreliella burgdorferi (strain ZS7) (Borrelia burgdorferi), this protein is DNA ligase.